The primary structure comprises 1234 residues: MVHPVQVGKRTRMSFSRLKEVGQMPNLIEVQLDSYDWFLKEGLQEVFDDINPIQDYTGNLNLEFVGYKLDLDSIKYSVEECKERDSTYAAPLKVKVRLLNKETGEIKEQEVFMGDFPLMTEQGTFIINGAERVIVSQLVRSPGVYYDMTVDKTGSKLFSATVIPNRGAWLEYETDSNNIIYVRIDKTRKLPITILARALGYGTDAEIIEFFGEDERLKATIEKDNTKTREEALLEIYKRLRPGEPPTVDSAESLIESLFFDAKRYDLSRVGRYKFNKKLAIHLRITNQIADQDIVNPQTGEILVQKGEKIDKDKAIEIQNCGINEVYIKIDDKSFKVIGNHFVDIHSLVPFDISDLNIKEYVFYPVLKEILDNYADEESIKEEIRKNIYRLIPKHIIREDIYATINYELGLSYDIGYKDDIDHLGNRRLRSVGELLQNQFRIGLSRMERVVKERMTIQDQEVITPQALINIRPVAASIKEFFGSSQLSQFMDQTNPLSELTHKRRLSALGPGGLSRERAGFEVRDVHHSHYGRMCPIETPEGPNIGLINSLATFAKVNEYGFIETPYRRIDPKNKRATNDIVYMTADEEDLYVIARSDEPIDENGYFIDDKVTVRAKEEVLVVPVSEVEYMDISPRQLVSVATAMIPFLENDDASRALMGSNMQRQAVPLLKPQAPIVGTGIEYKAATDSGVLPKAKNAGTVVYVSADEIRVRRDSDGGIDKYKLLKFKRSNQGTCINQRPIVSKGEVVAKETLLADGPSTDLGEIALGKNILMGFITWEGYNYEDAMLISEQLVKEDVFTSIHIEEYEAEARDTKLGPEEITRDIPNVGEEALKDIDERGIIRIGAEVRSGDILVGKVTPKGETELTAEERLLRAIFGEKAREVRDTSLRVPHGEAGIIVDVKIFTRENGDELPPGVNKLVRCYIAQKRKISVGDKMAGRHGNKGVISRVLPEEDMPFLPDGRPLQICLNPLGVPSRMNIGQVLEVHLGLAASKLGWHIATPVFDGAIESDIVDCLRKAGYSEDGKTVLYDGRTGEPFDNRVTVGYMYILKLAHLVDDKIHARSTGPYSLVTQQPLGGKAQFGGQRFGEMEVWALEAYGAAHTLQEILTVKSDDVVGRVKTYEAIVKGENIPEPGVPESFKVLIKELQALCLDVKVLNDDNQEIKLKESVDEDADELEVNIEGTENQPEEKEEKEEEKEDSDEYDDLREEDVEPDLEELSLDDLDLDDFGDEH.

The segment at 1169 to 1234 (ESVDEDADEL…LDLDDFGDEH (66 aa)) is disordered. 2 stretches are compositionally biased toward acidic residues: residues 1171–1180 (VDEDADELEV) and 1191–1234 (EKEE…GDEH).

It belongs to the RNA polymerase beta chain family. The RNAP catalytic core consists of 2 alpha, 1 beta, 1 beta' and 1 omega subunit. When a sigma factor is associated with the core the holoenzyme is formed, which can initiate transcription.

The catalysed reaction is RNA(n) + a ribonucleoside 5'-triphosphate = RNA(n+1) + diphosphate. In terms of biological role, DNA-dependent RNA polymerase catalyzes the transcription of DNA into RNA using the four ribonucleoside triphosphates as substrates. This Clostridium botulinum (strain Langeland / NCTC 10281 / Type F) protein is DNA-directed RNA polymerase subunit beta.